A 533-amino-acid chain; its full sequence is Glucose-6-phosphate isomerase (533 aa).

E341 functions as the Proton donor in the catalytic mechanism. Residues H372 and K501 contribute to the active site.

It belongs to the GPI family.

The protein resides in the cytoplasm. The catalysed reaction is alpha-D-glucose 6-phosphate = beta-D-fructose 6-phosphate. It participates in carbohydrate biosynthesis; gluconeogenesis. It functions in the pathway carbohydrate degradation; glycolysis; D-glyceraldehyde 3-phosphate and glycerone phosphate from D-glucose: step 2/4. Catalyzes the reversible isomerization of glucose-6-phosphate to fructose-6-phosphate. This Cereibacter sphaeroides (strain ATCC 17023 / DSM 158 / JCM 6121 / CCUG 31486 / LMG 2827 / NBRC 12203 / NCIMB 8253 / ATH 2.4.1.) (Rhodobacter sphaeroides) protein is Glucose-6-phosphate isomerase.